Here is a 317-residue protein sequence, read N- to C-terminus: Putative cuticle collagen 80 (317 aa).

Positions 80–262 (CNCGPQASNC…GAPGNDGAPG (183 aa)) are disordered. Triple-helical region stretches follow at residues 92–124 (GPPG…AGPA), 137–199 (GAPG…SGQR), and 202–264 (GLPG…PGSD). 3 stretches are compositionally biased toward low complexity: residues 108-124 (QPGP…AGPA), 135-145 (PQGAPGPAGAP), and 175-206 (AGDA…LPGP). 2 stretches are compositionally biased toward pro residues: residues 207–219 (SGRP…PGAP) and 230–240 (PAGPPGPPGPN). Positions 242–262 (QPGHPGQDGQPGAPGNDGAPG) are enriched in low complexity.

It belongs to the cuticular collagen family. In terms of assembly, collagen polypeptide chains are complexed within the cuticle by disulfide bonds and other types of covalent cross-links.

Nematode cuticles are composed largely of collagen-like proteins. The cuticle functions both as an exoskeleton and as a barrier to protect the worm from its environment. In Caenorhabditis elegans, this protein is Putative cuticle collagen 80 (col-80).